A 577-amino-acid chain; its full sequence is NKAP family protein UM04995 (577 aa).

Residues 1–479 form a disordered region; it reads MPTLAERLGS…YGGALLPGEG (479 aa). Basic and acidic residues predominate over residues 20-31; sequence KSSHDREQELRS. Over residues 36-49 the composition is skewed to polar residues; the sequence is SKQTSRNTAHQDLA. The span at 50 to 60 shows a compositional bias: basic and acidic residues; it reads SSERRSIDREL. Residues 70 to 89 show a composition bias toward low complexity; the sequence is SPLSSPQNGSSPRRQRGSPS. Basic and acidic residues-rich tracts occupy residues 127 to 163, 170 to 193, and 265 to 297; these read PRED…DSRR, SGDR…REAP, and DSSS…DKHH. 2 stretches are compositionally biased toward basic residues: residues 298 to 316 and 325 to 336; these read SSSR…RRSS and SRHRHTRSSRSH. Acidic residues predominate over residues 340–350; that stretch reads DDDDDDDEDVD. Basic and acidic residues predominate over residues 363 to 385; sequence KVSDGSDSGRSESETDSDSDARS. Positions 386–395 are enriched in basic residues; it reads SRHRRRHHKS. 2 stretches are compositionally biased toward basic and acidic residues: residues 396-408 and 417-439; these read DRSS…ESEK and SESE…RRDS. The stretch at 529–570 forms a coiled coil; that stretch reads RKENQVISAEEKRTMLRLQAEEKAKKEREIVSQFKELVDTLQ.

It belongs to the NKAP family.

The polypeptide is NKAP family protein UM04995 (Mycosarcoma maydis (Corn smut fungus)).